A 106-amino-acid polypeptide reads, in one-letter code: MICOS complex subunit MIC12 (106 aa).

Residues Val-11–Tyr-27 traverse the membrane as a helical segment.

This sequence belongs to the MICOS complex subunit Mic12 family. As to quaternary structure, component of the mitochondrial contact site and cristae organizing system (MICOS) complex.

It localises to the mitochondrion inner membrane. Its function is as follows. Component of the MICOS complex, a large protein complex of the mitochondrial inner membrane that plays crucial roles in the maintenance of crista junctions, inner membrane architecture, and formation of contact sites to the outer membrane. This chain is MICOS complex subunit MIC12 (AIM5), found in Saccharomyces cerevisiae (strain RM11-1a) (Baker's yeast).